Consider the following 843-residue polypeptide: Protein P (843 aa).

Residues Met-1 to Gln-177 form a terminal protein domain (TP) region. Residues Asp-178–Ile-346 form a spacer region. Residues Gln-220 to Thr-265 form a disordered region. Residues Leu-223–Arg-235 are compositionally biased toward low complexity. Residues Glu-347–Gln-690 are polymerase/reverse transcriptase domain (RT). Positions Glu-357 to Ile-600 constitute a Reverse transcriptase domain. Mg(2+) contacts are provided by Asp-429, Asp-551, and Asp-552.

This sequence belongs to the hepadnaviridae P protein family.

The enzyme catalyses DNA(n) + a 2'-deoxyribonucleoside 5'-triphosphate = DNA(n+1) + diphosphate. It carries out the reaction Endonucleolytic cleavage to 5'-phosphomonoester.. Its activity is regulated as follows. Activated by host HSP70 and HSP40 in vitro to be able to bind the epsilon loop of the pgRNA. Because deletion of the RNase H region renders the protein partly chaperone-independent, the chaperones may be needed indirectly to relieve occlusion of the RNA-binding site by this domain. Inhibited by several reverse-transcriptase inhibitors: Lamivudine, Adefovir and Entecavir. Multifunctional enzyme that converts the viral RNA genome into dsDNA in viral cytoplasmic capsids. This enzyme displays a DNA polymerase activity that can copy either DNA or RNA templates, and a ribonuclease H (RNase H) activity that cleaves the RNA strand of RNA-DNA heteroduplexes in a partially processive 3'- to 5'-endonucleasic mode. Neo-synthesized pregenomic RNA (pgRNA) are encapsidated together with the P protein, and reverse-transcribed inside the nucleocapsid. Initiation of reverse-transcription occurs first by binding the epsilon loop on the pgRNA genome, and is initiated by protein priming, thereby the 5'-end of (-)DNA is covalently linked to P protein. Partial (+)DNA is synthesized from the (-)DNA template and generates the relaxed circular DNA (RC-DNA) genome. After budding and infection, the RC-DNA migrates in the nucleus, and is converted into a plasmid-like covalently closed circular DNA (cccDNA). The activity of P protein does not seem to be necessary for cccDNA generation, and is presumably released from (+)DNA by host nuclear DNA repair machinery. The sequence is that of Protein P from Hepatitis B virus genotype B2 (isolate Vietnam/9873/1997) (HBV-B).